A 355-amino-acid polypeptide reads, in one-letter code: Serum paraoxonase/arylesterase 1 (355 aa).

Cysteines 42 and 353 form a disulfide. The Ca(2+) site is built by Glu-53 and Asp-54. His-115 (proton acceptor) is an active-site residue. Positions 117, 168, 169, and 224 each coordinate Ca(2+). The N-linked (GlcNAc...) asparagine glycan is linked to Asn-253. Residues Asp-269 and Asn-270 each coordinate Ca(2+). N-linked (GlcNAc...) asparagine glycosylation is found at Asn-270 and Asn-324.

It belongs to the paraoxonase family. As to quaternary structure, homodimer. Heterooligomer with phosphate-binding protein (HPBP). Interacts with CLU. Requires Ca(2+) as cofactor. Glycosylated. In terms of processing, the signal sequence is not cleaved. Post-translationally, present in two forms, form B contains a disulfide bond, form A does not. As to expression, plasma, associated with HDL (at protein level). Expressed in liver, but not in heart, brain, placenta, lung, skeletal muscle, kidney or pancreas.

It localises to the secreted. The protein localises to the extracellular space. It carries out the reaction a phenyl acetate + H2O = a phenol + acetate + H(+). The catalysed reaction is An aryl dialkyl phosphate + H2O = dialkyl phosphate + an aryl alcohol.. The enzyme catalyses an N-acyl-L-homoserine lactone + H2O = an N-acyl-L-homoserine + H(+). In terms of biological role, hydrolyzes the toxic metabolites of a variety of organophosphorus insecticides. Capable of hydrolyzing a broad spectrum of organophosphate substrates and lactones, and a number of aromatic carboxylic acid esters. Mediates an enzymatic protection of low density lipoproteins against oxidative modification and the consequent series of events leading to atheroma formation. The sequence is that of Serum paraoxonase/arylesterase 1 (PON1) from Homo sapiens (Human).